The sequence spans 353 residues: Photosystem II D2 protein (353 aa).

The residue at position 2 (threonine 2) is an N-acetylthreonine. Threonine 2 is modified (phosphothreonine). Residues 41–61 traverse the membrane as a helical segment; the sequence is CAYFALGGWFTGTTFVTSWYT. Histidine 118 lines the chlorophyll a pocket. A helical transmembrane segment spans residues 125-141; that stretch reads GFMLRQFELARSVQLRP. Glutamine 130 and asparagine 143 together coordinate pheophytin a. The helical transmembrane segment at 153 to 166 threads the bilayer; the sequence is VFVSVFLIYPLGQS. Histidine 198 provides a ligand contact to chlorophyll a. The chain crosses the membrane as a helical span at residues 208-228; that stretch reads AALLCAIHGATVENTLFEDGD. A plastoquinone is bound by residues histidine 215 and phenylalanine 262. Histidine 215 lines the Fe cation pocket. A Fe cation-binding site is contributed by histidine 269. Residues 279 to 295 traverse the membrane as a helical segment; sequence GLWMSALGVVGLALNLR.

It belongs to the reaction center PufL/M/PsbA/D family. In terms of assembly, PSII is composed of 1 copy each of membrane proteins PsbA, PsbB, PsbC, PsbD, PsbE, PsbF, PsbH, PsbI, PsbJ, PsbK, PsbL, PsbM, PsbT, PsbX, PsbY, PsbZ, Psb30/Ycf12, at least 3 peripheral proteins of the oxygen-evolving complex and a large number of cofactors. It forms dimeric complexes. The D1/D2 heterodimer binds P680, chlorophylls that are the primary electron donor of PSII, and subsequent electron acceptors. It shares a non-heme iron and each subunit binds pheophytin, quinone, additional chlorophylls, carotenoids and lipids. There is also a Cl(-1) ion associated with D1 and D2, which is required for oxygen evolution. The PSII complex binds additional chlorophylls, carotenoids and specific lipids. is required as a cofactor.

It is found in the plastid. Its subcellular location is the chloroplast thylakoid membrane. It carries out the reaction 2 a plastoquinone + 4 hnu + 2 H2O = 2 a plastoquinol + O2. Functionally, photosystem II (PSII) is a light-driven water:plastoquinone oxidoreductase that uses light energy to abstract electrons from H(2)O, generating O(2) and a proton gradient subsequently used for ATP formation. It consists of a core antenna complex that captures photons, and an electron transfer chain that converts photonic excitation into a charge separation. The D1/D2 (PsbA/PsbD) reaction center heterodimer binds P680, the primary electron donor of PSII as well as several subsequent electron acceptors. D2 is needed for assembly of a stable PSII complex. In Nymphaea alba (White water-lily), this protein is Photosystem II D2 protein.